Here is a 202-residue protein sequence, read N- to C-terminus: MNILRKIVKNRKDEDTQKPSPASAPPDDDDLWLPPPEYVPLKEFTSKKNMRNFCINGEVKVCSPNGYSFRILRHILRSFDEIYSGNHRMIGLVKVVIGLALSGAPVPEGMNWVYKLRRTLIFQWADSRGPLEGEELEHSQEITWDDDTEFVGLQIRVIARQCHIQGRIWCINTNSRTCQLWSDMSLKTQMSEEDKDSSLLLE.

The disordered stretch occupies residues 1–33 (MNILRKIVKNRKDEDTQKPSPASAPPDDDDLWL). The PPXY motif motif lies at 35–38 (PPEY). An essential for glycoprotein binding region spans residues 115–151 (KLRRTLIFQWADSRGPLEGEELEHSQEITWDDDTEFV).

This sequence belongs to the lyssavirus matrix protein family. Homomultimer. Interacts with nucleoprotein and with the cytoplasmic domain of glycoprotein. Interacts with host ATP6V1A; this interaction plays an important role in virion uncoating after viral entry.

The protein localises to the virion membrane. It is found in the host endomembrane system. Its subcellular location is the host cytoplasm. Its function is as follows. Plays a major role in assembly, budding and uncoating of virion after membrane fusion. Completely covers the ribonucleoprotein coil and keep it in condensed bullet-shaped form. Inhibits viral transcription and stimulates replication. Plays a major role in early induction of TRAIL-mediated apoptosis in infected neurons. Inhibits the integrated stress response (ISR) in the infected cell by blocking the formation of stress granules. The polypeptide is Matrix protein (M) (Homo sapiens (Human)).